The chain runs to 50 residues: Large ribosomal subunit protein bL33 (50 aa).

The protein belongs to the bacterial ribosomal protein bL33 family.

In Aquifex aeolicus (strain VF5), this protein is Large ribosomal subunit protein bL33 (rpmG).